Reading from the N-terminus, the 169-residue chain is Putative phosphoesterase BLi01284/BL02661 (169 aa).

The active-site Proton donor is His-34. Short sequence motifs (HXTX) lie at residues 34–37 (HLTL) and 115–118 (HVTV). Residue His-115 is the Proton acceptor of the active site.

The protein belongs to the 2H phosphoesterase superfamily. YjcG family.

The protein is Putative phosphoesterase BLi01284/BL02661 of Bacillus licheniformis (strain ATCC 14580 / DSM 13 / JCM 2505 / CCUG 7422 / NBRC 12200 / NCIMB 9375 / NCTC 10341 / NRRL NRS-1264 / Gibson 46).